A 704-amino-acid chain; its full sequence is UvrABC system protein C (704 aa).

The disordered stretch occupies residues 1 to 77 (MIHDPAEPPA…PAQAGAGPMA (77 aa)). Positions 49–66 (VEEDDEARLPEVEDEPEA) are enriched in acidic residues. Residues 67-77 (EPAQAGAGPMA) show a composition bias toward low complexity. One can recognise a GIY-YIG domain in the interval 92 to 170 (TSPGVYRMLN…IKQLRPRFNV (79 aa)). The 36-residue stretch at 280–315 (RAVKELLAAEMEKASGELEFETAALYRDRLAALSAI) folds into the UVR domain.

The protein belongs to the UvrC family. As to quaternary structure, interacts with UvrB in an incision complex.

The protein resides in the cytoplasm. The UvrABC repair system catalyzes the recognition and processing of DNA lesions. UvrC both incises the 5' and 3' sides of the lesion. The N-terminal half is responsible for the 3' incision and the C-terminal half is responsible for the 5' incision. The polypeptide is UvrABC system protein C (Rhodopseudomonas palustris (strain ATCC BAA-98 / CGA009)).